A 127-amino-acid polypeptide reads, in one-letter code: Acetylcholine receptor subunit alpha (127 aa).

Residues 1–127 lie on the Extracellular side of the membrane; that stretch reads ADGIFAIDQF…YFIVNVIIPC (127 aa). A disulfide bridge connects residues Cys33 and Cys47. 2 N-linked (GlcNAc...) asparagine glycosylation sites follow: Asn46 and Asn94. Cys97 and Cys98 are oxidised to a cystine.

Belongs to the ligand-gated ion channel (TC 1.A.9) family. Acetylcholine receptor (TC 1.A.9.1) subfamily. Alpha-1/CHRNA1 sub-subfamily. In terms of assembly, one of the alpha chains that assemble within the acetylcholine receptor, a pentamer of two alpha chains, a beta, a delta, and a gamma or epsilon chains.

The protein resides in the postsynaptic cell membrane. It localises to the cell membrane. It catalyses the reaction K(+)(in) = K(+)(out). The catalysed reaction is Na(+)(in) = Na(+)(out). Functionally, upon acetylcholine binding, the AChR responds by an extensive change in conformation that affects all subunits and leads to opening of an ion-conducting channel across the plasma membrane. Does not bind alpha-bungarotoxin. This Natrix tessellata (Dice snake) protein is Acetylcholine receptor subunit alpha (CHRNA1).